The chain runs to 729 residues: Dipeptidyl peptidase 3 (729 aa).

His-459 serves as a coordination point for Zn(2+). Glu-460 is an active-site residue. Positions 464 and 517 each coordinate Zn(2+).

The protein belongs to the peptidase M49 family. The cofactor is Zn(2+).

The protein localises to the cytoplasm. It carries out the reaction Release of an N-terminal dipeptide from a peptide comprising four or more residues, with broad specificity. Also acts on dipeptidyl 2-naphthylamides.. In Nematostella vectensis (Starlet sea anemone), this protein is Dipeptidyl peptidase 3 (dpp3).